A 177-amino-acid polypeptide reads, in one-letter code: ATP synthase subunit delta (177 aa).

The protein belongs to the ATPase delta chain family. In terms of assembly, F-type ATPases have 2 components, F(1) - the catalytic core - and F(0) - the membrane proton channel. F(1) has five subunits: alpha(3), beta(3), gamma(1), delta(1), epsilon(1). F(0) has three main subunits: a(1), b(2) and c(10-14). The alpha and beta chains form an alternating ring which encloses part of the gamma chain. F(1) is attached to F(0) by a central stalk formed by the gamma and epsilon chains, while a peripheral stalk is formed by the delta and b chains.

It localises to the cell inner membrane. Its function is as follows. F(1)F(0) ATP synthase produces ATP from ADP in the presence of a proton or sodium gradient. F-type ATPases consist of two structural domains, F(1) containing the extramembraneous catalytic core and F(0) containing the membrane proton channel, linked together by a central stalk and a peripheral stalk. During catalysis, ATP synthesis in the catalytic domain of F(1) is coupled via a rotary mechanism of the central stalk subunits to proton translocation. This protein is part of the stalk that links CF(0) to CF(1). It either transmits conformational changes from CF(0) to CF(1) or is implicated in proton conduction. This chain is ATP synthase subunit delta, found in Sulfurimonas denitrificans (strain ATCC 33889 / DSM 1251) (Thiomicrospira denitrificans (strain ATCC 33889 / DSM 1251)).